The sequence spans 441 residues: Inositol hexakisphosphate kinase 1 (441 aa).

The disordered stretch occupies residues 100–175 (ETVEQDDTTE…MLDGNSGLSS (76 aa)). Basic residues predominate over residues 113-123 (PRRKHSRRSLH). A compositionally biased stretch (low complexity) spans 137–149 (SLSLETSESSQEA). The span at 150 to 160 (KSPKVELHSHS) shows a compositional bias: basic and acidic residues. Ser151 is modified (phosphoserine). Substrate is bound at residue 220 to 228 (PCVLDLKMG). The segment at 370–392 (SSCGPSTSPSNTSPEAGPSSQPK) is disordered. Residues 372-391 (CGPSTSPSNTSPEAGPSSQP) are compositionally biased toward polar residues.

Belongs to the inositol phosphokinase (IPK) family.

The protein resides in the cytoplasm. Its subcellular location is the nucleus. The catalysed reaction is 1D-myo-inositol hexakisphosphate + ATP = 5-diphospho-1D-myo-inositol 1,2,3,4,6-pentakisphosphate + ADP. It carries out the reaction 1-diphospho-1D-myo-inositol 2,3,4,5,6-pentakisphosphate + ATP + H(+) = 1,5-bis(diphospho)-1D-myo-inositol 2,3,4,6-tetrakisphosphate + ADP. Functionally, converts inositol hexakisphosphate (InsP6) to diphosphoinositol pentakisphosphate (InsP7/PP-InsP5). Converts 1,3,4,5,6-pentakisphosphate (InsP5) to PP-InsP4. This Homo sapiens (Human) protein is Inositol hexakisphosphate kinase 1 (IP6K1).